Here is an 80-residue protein sequence, read N- to C-terminus: U-scoloptoxin(15)-Er1a (80 aa).

The signal sequence occupies residues Met1–Ser22.

Belongs to the scoloptoxin-15 family. Post-translationally, contains 2 disulfide bonds. In terms of tissue distribution, expressed by the venom gland.

It is found in the secreted. The polypeptide is U-scoloptoxin(15)-Er1a (Ethmostigmus rubripes (Giant centipede)).